A 319-amino-acid polypeptide reads, in one-letter code: MEPILAPNPNRFVIFPIQYHDIWNMYKKAEASFWTVEEVDISKDINDWNKLTPDEKYFIKHVLAFFAASDGIVNENLAERFCTEVQITEARCFYGFQMAIENIHSEMYSLLIDTYVKDSNEKNYLFNAIETMPCVKKKADWAQKWIHDSAGYGERLIAFAAVEGIFFSGSFASIFWLKKRGLMPGLTFSNELISRDEGLHCDFACLMFKHLLHPPSEETVRSIITDAVSIEQEFLTAALPVKLIGMNCEMMKTYIEFVADRLISELGFKKIYNVTNPFDFMENISLEGKTNFFEKRVGEYQKMGVMSQEDNHFSLDVDF.

Positions 70, 101, and 104 each coordinate Fe cation. Residue Y108 is part of the active site. Positions 163, 197, and 200 each coordinate Fe cation. The segment at 313 to 319 is interaction with R1; the sequence is FSLDVDF.

Belongs to the ribonucleoside diphosphate reductase small chain family. In terms of assembly, interacts with RNR1/OPG080 subunit. Can interact with host RNR1 supunit. The cofactor is Fe cation.

It carries out the reaction a 2'-deoxyribonucleoside 5'-diphosphate + [thioredoxin]-disulfide + H2O = a ribonucleoside 5'-diphosphate + [thioredoxin]-dithiol. In terms of biological role, ribonucleoside-diphosphate reductase holoenzyme provides the precursors necessary for viral DNA synthesis. Allows virus growth in non-dividing cells. Catalyzes the biosynthesis of deoxyribonucleotides from the corresponding ribonucleotides. This is Ribonucleoside-diphosphate reductase small chain (OPG048) from Vaccinia virus (strain Ankara) (VACV).